A 511-amino-acid polypeptide reads, in one-letter code: Dihydrolipoyl dehydrogenase, mitochondrial (511 aa).

Residues 75–84 (EKRGTLGGTC), K93, G157, and 187–189 (TGS) contribute to the FAD site. A disulfide bridge links C84 with C89. Residues 224–231 (GGGIIGLE), E247, L281, and G316 contribute to the NAD(+) site. Residues D357 and 363–366 (MLAH) each bind FAD. Residue H489 is the Proton acceptor of the active site.

It belongs to the class-I pyridine nucleotide-disulfide oxidoreductase family. As to quaternary structure, homodimer. Requires FAD as cofactor.

Its subcellular location is the mitochondrion matrix. It carries out the reaction N(6)-[(R)-dihydrolipoyl]-L-lysyl-[protein] + NAD(+) = N(6)-[(R)-lipoyl]-L-lysyl-[protein] + NADH + H(+). Functionally, lipoamide dehydrogenase is a component of the alpha-ketoacid dehydrogenase complexes. Malfunction of this protein blocks the progression of cell cycle from G1 to S phase. The protein is Dihydrolipoyl dehydrogenase, mitochondrial (dld1) of Schizosaccharomyces pombe (strain 972 / ATCC 24843) (Fission yeast).